Reading from the N-terminus, the 305-residue chain is tRNA uridine(34) hydroxylase (305 aa).

The Rhodanese domain occupies 126 to 220 (SDPEVIVIDT…YLEQIPPEES (95 aa)). Cysteine 180 serves as the catalytic Cysteine persulfide intermediate.

The protein belongs to the TrhO family.

It catalyses the reaction uridine(34) in tRNA + AH2 + O2 = 5-hydroxyuridine(34) in tRNA + A + H2O. In terms of biological role, catalyzes oxygen-dependent 5-hydroxyuridine (ho5U) modification at position 34 in tRNAs. In Trichormus variabilis (strain ATCC 29413 / PCC 7937) (Anabaena variabilis), this protein is tRNA uridine(34) hydroxylase.